We begin with the raw amino-acid sequence, 456 residues long: Bifunctional protein GlmU (456 aa).

The interval 1–231 (MERTCLAIIL…EEELTGCNTR (231 aa)) is pyrophosphorylase. UDP-N-acetyl-alpha-D-glucosamine is bound by residues 10-13 (LAAG), lysine 24, glutamine 77, and 82-83 (GT). Aspartate 107 is a Mg(2+) binding site. UDP-N-acetyl-alpha-D-glucosamine-binding residues include glycine 143, glutamate 157, asparagine 172, and asparagine 229. Asparagine 229 lines the Mg(2+) pocket. The segment at 232–252 (AELAYIERLWQQRRRHELMLA) is linker. The tract at residues 253–456 (GVSMVAPETV…LARKIAKAAE (204 aa)) is N-acetyltransferase. The UDP-N-acetyl-alpha-D-glucosamine site is built by arginine 318 and lysine 336. Catalysis depends on histidine 348, which acts as the Proton acceptor. Tyrosine 351 and asparagine 362 together coordinate UDP-N-acetyl-alpha-D-glucosamine. Residues alanine 365, 371-372 (NY), serine 390, serine 408, and arginine 425 each bind acetyl-CoA.

The protein in the N-terminal section; belongs to the N-acetylglucosamine-1-phosphate uridyltransferase family. This sequence in the C-terminal section; belongs to the transferase hexapeptide repeat family. In terms of assembly, homotrimer. Mg(2+) is required as a cofactor.

The protein localises to the cytoplasm. It catalyses the reaction alpha-D-glucosamine 1-phosphate + acetyl-CoA = N-acetyl-alpha-D-glucosamine 1-phosphate + CoA + H(+). The catalysed reaction is N-acetyl-alpha-D-glucosamine 1-phosphate + UTP + H(+) = UDP-N-acetyl-alpha-D-glucosamine + diphosphate. It participates in nucleotide-sugar biosynthesis; UDP-N-acetyl-alpha-D-glucosamine biosynthesis; N-acetyl-alpha-D-glucosamine 1-phosphate from alpha-D-glucosamine 6-phosphate (route II): step 2/2. The protein operates within nucleotide-sugar biosynthesis; UDP-N-acetyl-alpha-D-glucosamine biosynthesis; UDP-N-acetyl-alpha-D-glucosamine from N-acetyl-alpha-D-glucosamine 1-phosphate: step 1/1. Its pathway is bacterial outer membrane biogenesis; LPS lipid A biosynthesis. Catalyzes the last two sequential reactions in the de novo biosynthetic pathway for UDP-N-acetylglucosamine (UDP-GlcNAc). The C-terminal domain catalyzes the transfer of acetyl group from acetyl coenzyme A to glucosamine-1-phosphate (GlcN-1-P) to produce N-acetylglucosamine-1-phosphate (GlcNAc-1-P), which is converted into UDP-GlcNAc by the transfer of uridine 5-monophosphate (from uridine 5-triphosphate), a reaction catalyzed by the N-terminal domain. This chain is Bifunctional protein GlmU, found in Sinorhizobium medicae (strain WSM419) (Ensifer medicae).